A 347-amino-acid chain; its full sequence is L-Ala-D/L-amino acid epimerase (347 aa).

Residue 156–158 (KLK) coordinates substrate. Mg(2+) is bound by residues Asp183, Glu211, and Asp237. Substrate is bound by residues Lys259 and 309–311 (DID).

The protein belongs to the mandelate racemase/muconate lactonizing enzyme family. Mg(2+) is required as a cofactor.

In terms of biological role, dipeptide epimerase with a broad substrate specificity. Catalyzes the epimerization of L-Ala-L-Ala, L-Ala-L-Ser, L-Ala-L-Thr, L-Ala-L-Met, L-Ala-L-Phe, L-Ala-L-Tyr, L-Gly-L-Asp, L-Val-L-Asp, L-Val-L-Glu and L-Val-L-Phe (in vitro). Can also catalyze the epimerization of L-Ala-L-Glu, but with lower efficiency. The protein is L-Ala-D/L-amino acid epimerase of Pedosphaera parvula (strain Ellin514).